Consider the following 146-residue polypeptide: Hemoglobin subunit beta (146 aa).

Residue Val1 is modified to N-acetylvaline. Residues 2–146 (NLTAAEKTQV…VANALAHKYH (145 aa)) enclose the Globin domain. Position 12 is a phosphothreonine (Thr12). Position 59 is an N6-acetyllysine (Lys59). His63 provides a ligand contact to heme b. An N6-acetyllysine modification is found at Lys82. Residue His92 coordinates heme b. At Cys93 the chain carries S-nitrosocysteine. Position 144 is an N6-acetyllysine (Lys144).

Belongs to the globin family. In terms of assembly, heterotetramer of two alpha chains and two beta chains. Red blood cells.

Involved in oxygen transport from the lung to the various peripheral tissues. In Loxodonta africana (African elephant), this protein is Hemoglobin subunit beta (HBB).